Consider the following 382-residue polypeptide: Protein phosphatase 1A (382 aa).

A lipid anchor (N-myristoyl glycine) is attached at Gly-2. The PPM-type phosphatase domain occupies 23–291 (RYGLSSMQGW…DNMSVILICF (269 aa)). Mn(2+) contacts are provided by Asp-60, Gly-61, Asp-239, and Asp-282. Ser-375 and Ser-377 each carry phosphoserine.

The protein belongs to the PP2C family. As to quaternary structure, monomer. Interacts with SMAD2; the interaction dephosphorylates SMAD2 in its C-terminal SXS motif resulting in disruption of the SMAD2/SMAD4 complex, SMAD2 nuclear export and termination of the TGF-beta-mediated signaling. Interacts with SMAD2; the interaction dephosphorylates SMAD2 in its C-terminal SXS motif resulting in disruption of the SMAD2/SMAD4 complex, SMAD2 nuclear export and termination of the TGF-beta-mediated signaling. Interacts with the phosphorylated form of IKBKB/IKKB. Requires Mg(2+) as cofactor. The cofactor is Mn(2+). N-myristoylation is essential for the recognition of its substrates for dephosphorylation.

Its subcellular location is the nucleus. It is found in the cytoplasm. It localises to the cytosol. The protein resides in the membrane. The enzyme catalyses O-phospho-L-seryl-[protein] + H2O = L-seryl-[protein] + phosphate. It catalyses the reaction O-phospho-L-threonyl-[protein] + H2O = L-threonyl-[protein] + phosphate. Enzyme with a broad specificity. Negatively regulates TGF-beta signaling through dephosphorylating SMAD2 and SMAD3, resulting in their dissociation from SMAD4, nuclear export of the SMADs and termination of the TGF-beta-mediated signaling. Dephosphorylates PRKAA1 and PRKAA2. Plays an important role in the termination of TNF-alpha-mediated NF-kappa-B activation through dephosphorylating and inactivating IKBKB/IKKB. The chain is Protein phosphatase 1A (PPM1A) from Bos taurus (Bovine).